Here is a 568-residue protein sequence, read N- to C-terminus: 2-succinyl-5-enolpyruvyl-6-hydroxy-3-cyclohexene-1-carboxylate synthase (568 aa).

Belongs to the TPP enzyme family. MenD subfamily. Homodimer. The cofactor is Mg(2+). Requires Mn(2+) as cofactor. Thiamine diphosphate is required as a cofactor.

It carries out the reaction isochorismate + 2-oxoglutarate + H(+) = 5-enolpyruvoyl-6-hydroxy-2-succinyl-cyclohex-3-ene-1-carboxylate + CO2. It participates in quinol/quinone metabolism; 1,4-dihydroxy-2-naphthoate biosynthesis; 1,4-dihydroxy-2-naphthoate from chorismate: step 2/7. The protein operates within quinol/quinone metabolism; menaquinone biosynthesis. In terms of biological role, catalyzes the thiamine diphosphate-dependent decarboxylation of 2-oxoglutarate and the subsequent addition of the resulting succinic semialdehyde-thiamine pyrophosphate anion to isochorismate to yield 2-succinyl-5-enolpyruvyl-6-hydroxy-3-cyclohexene-1-carboxylate (SEPHCHC). This Haemophilus influenzae (strain ATCC 51907 / DSM 11121 / KW20 / Rd) protein is 2-succinyl-5-enolpyruvyl-6-hydroxy-3-cyclohexene-1-carboxylate synthase.